Here is a 609-residue protein sequence, read N- to C-terminus: MGSVTPIPLPKIDEPEEYNTNYILFWNHVGLELNRVTHTVGGPLTGPPLSARALGMLHLAIHDAYFSICPPTDFTTFLSPDTENAAYRLPSPNGANDARQAVAGAALKMLSSLYMKPVEQPNPNPGANISDNAYAQLGLVLDRSVLEAPGGVDRESASFMFGEDVADVFFALLNDPRGASQEGYHPTPGRYKFDDEPTHPVVLIPVDPNNPNGPKMPFRQYHAPFYGKTTKRFATQSEHFLADPPGLRSNADETAEYDDAVRVAIAMGGAQALNSTKRSPWQTAQGLYWAYDGSNLIGTPPRFYNQIVRRIAVTYKKEEDLANSEVNNADFARLFALVDVACTDAGIFSWKEKWEFEFWRPLSGVRDDGRPDHGDPFWLTLGAPATNTNDIPFKPPFPAYPSGHATFGGAVFQMVRRYYNGRVGTWKDDEPDNIAIDMMISEELNGVNRDLRQPYDPTAPIEDQPGIVRTRIVRHFDSAWELMFENAISRIFLGVHWRFDAAAARDILIPTTTKDVYAVDNNGATVFQNVEDIRYTTRGTREDPEGLFPIGGVPLGIEIADEIFNNGLKPTPPEIQPMPQETPVQKPVGQQPVKGMWEEEQAPVVKEAP.

Vanadate is bound by residues lysine 353, arginine 360, serine 402, glycine 403, histidine 404, arginine 490, and histidine 496. The Proton donor role is filled by histidine 404. A disordered region spans residues 569-609 (KPTPPEIQPMPQETPVQKPVGQQPVKGMWEEEQAPVVKEAP).

The protein belongs to the vanadium-dependent haloperoxidase family. As to quaternary structure, homotetramer. It depends on vanadate as a cofactor. In terms of processing, the N-terminus is blocked.

It localises to the secreted. The enzyme catalyses RH + Cl(-) + H2O2 = RCl + 2 H2O.. Functionally, catalyzes the oxidation of chloride in the presence of hydrogen peroxide to hypochlorous acid (ClOH), which in turn can react with a nucleophilic acceptor (RH), to form a chlorinated compound. The chain is Vanadium chloroperoxidase (CPO) from Curvularia inaequalis (Helminthosporium inaequale).